Reading from the N-terminus, the 599-residue chain is UvrABC system protein C (599 aa).

In terms of domain architecture, GIY-YIG spans 19–95 (ESTGVYIFYD…IKKYRPIMNV (77 aa)). The UVR domain maps to 206-241 (EEIIEKLYDQMQEYSKNLEFEKAAKIRDKIRLLQNL).

This sequence belongs to the UvrC family. Interacts with UvrB in an incision complex.

It is found in the cytoplasm. In terms of biological role, the UvrABC repair system catalyzes the recognition and processing of DNA lesions. UvrC both incises the 5' and 3' sides of the lesion. The N-terminal half is responsible for the 3' incision and the C-terminal half is responsible for the 5' incision. This chain is UvrABC system protein C, found in Dictyoglomus thermophilum (strain ATCC 35947 / DSM 3960 / H-6-12).